A 514-amino-acid chain; its full sequence is Myocyte-specific enhancer factor 2D (514 aa).

In terms of domain architecture, MADS-box spans 3–57; the sequence is RKKIQIQRITDERNRQVTFTKRKFGLMKKAYELSVLCDCEIALIIFNHSNKLFQY. The mef2-type DNA-binding region spans 58-86; the sequence is ASTDMDKVLLKYTEYNEPHESRTNADIIE. A phosphoserine mark is found at aspartate 97, serine 98, and serine 106. Phosphothreonine is present on leucine 107. The residue at position 110 (serine 110) is a Phosphoserine. A Phosphoserine; by PKA modification is found at serine 121. The segment at 174–207 is disordered; the sequence is TDPRLLSPQQPALQRNSVSPGLPQRPASAGAMLG. A Phosphoserine; by MAPK7 modification is found at serine 180. A compositionally biased stretch (polar residues) spans 180–192; that stretch reads SPQQPALQRNSVS. Serine 190 carries the post-translational modification Phosphoserine; by PKA. Serine 231 bears the Phosphoserine mark. The disordered stretch occupies residues 244 to 269; sequence NKVIPAKSPPPPTHNTQLGAPSRKPD. N6-acetyllysine is present on lysine 245. Serine 251 carries the post-translational modification Phosphoserine. The tract at residues 286-292 is beta domain; that stretch reads TEDHLDL. 2 disordered regions span residues 364-399 and 430-514; these read WQQP…QQPH and SIKS…WTLK. A compositionally biased stretch (pro residues) spans 367-396; sequence PQPPQQPQPPQPPQSQPQPPQPQPQQPPQQ. Position 432 is an N6-acetyllysine; alternate (lysine 432). Residue lysine 432 forms a Glycyl lysine isopeptide (Lys-Gly) (interchain with G-Cter in SUMO); alternate linkage. Serine 437 is modified (phosphoserine).

This sequence belongs to the MEF2 family. Forms a complex with class II HDACs in undifferentiating cells. On myogenic differentiation, HDACs are released into the cytoplasm allowing MEF2s to interact with other proteins for activation. Interacts with HDAC4 (in undifferentiating cells); the interaction translocates MEF2D to nuclear dots. Forms a heterodimer with MEF2A. Interacts with MAPK7; the interaction phosphorylates but does not activate MEF2D. Interacts with MYOG. Interacts with CCAR2 and HDAC3. Phosphorylated on Ser-437 is which is required for Lys-432 sumoylation and inhibits transcriptional activity. Phosphorylation on this residue by CDK5 is dependent on p35 and calpains. Phosphorylated by PKA at Ser-121 and Ser-190 represses transcriptional activity in embryonic and postnatal skeletal muscle, and stabilizes protein levels. No in vitro phosphorylation by PKA on Thr-20. Phosphorylated and activated by CaMK4. Post-translationally, acetylated on Lys-432 by CREBBP. Acetylated by EP300. Deacetylated by SIRT1 and HDAC3. In terms of processing, sumoylated on Lys-432 with SUMO2 but not SUMO1; which inhibits transcriptional activity and myogenic activity. Desumoylated by SENP3. Proteolytically cleaved in cerebellar granule neurons by caspase 7 following neurotoxicity. Preferentially cleaves the CDK5-mediated hyperphosphorylated form which leads to neuron apoptosis and transcriptional inactivation. As to expression, widely expressed though mainly restricted to skeletal and cardiac muscle, brain, neurons and lymphocytes. Differentially expressed depending on if isoforms contain the beta domain or not, with the total expression of the beta domain-lacking isoforms vastly exceeding that of the beta domain-containing isoforms. Isoforms containing the beta domain are expressed primarily in skeletal and cardiac muscle and in brain. Also present in lung and testis. Splicing to include the beta domain is induced in differentiating myocytes. Isoforms lacking the beta domain are expressed less abundantly in skeletal muscle, brain and lymphocytes, and are uniquely found in ovary, liver, spleen and kidney. In embryos, the beta domain-containing and beta domain-lacking isoforms are equally expressed. Also expressed cerebellar granule neurons and other regions of the CNS. Highest levels in the olfactory bulb, cortex, hippocampus, thalamus and cerebellum.

The protein localises to the nucleus. Functionally, transcriptional activator which binds specifically to the MEF2 element, 5'-YTA[AT](4)TAR-3', found in numerous muscle-specific, growth factor- and stress-induced genes. Mediates cellular functions not only in skeletal and cardiac muscle development, but also in neuronal differentiation and survival. Plays diverse roles in the control of cell growth, survival and apoptosis via p38 MAPK signaling in muscle-specific and/or growth factor-related transcription. Plays a critical role in the regulation of neuronal apoptosis. The sequence is that of Myocyte-specific enhancer factor 2D (Mef2d) from Mus musculus (Mouse).